Consider the following 589-residue polypeptide: LRR receptor-like serine/threonine-protein kinase FEI 2 (589 aa).

The signal sequence occupies residues 1-28 (MGICLMKRCCSWFLLISFLSALTNENEA). Residues 29–236 (ISPDGEALLS…TGQGGNNPKR (208 aa)) are Extracellular-facing. LRR repeat units follow at residues 72 to 96 (TKRVIALSLTYHKLRGPLPPELGKL), 97 to 120 (DQLRLLMLHNNALYQSIPASLGNC), 122 to 144 (ALEGIYLQNNYITGTIPSEIGNL), 145 to 168 (SGLKNLDLSNNNLNGAIPASLGQL), and 170 to 193 (RLTKFNVSNNFLVGKIPSDGLLAR). N-linked (GlcNAc...) asparagine glycosylation is found at Asn-119 and Asn-143. N-linked (GlcNAc...) asparagine glycans are attached at residues Asn-175, Asn-215, and Asn-219. The chain crosses the membrane as a helical span at residues 237 to 257 (LLISASATVGGLLLVALMCFW). The Cytoplasmic portion of the chain corresponds to 258 to 589 (GCFLYKKLGR…PSDFYDSSSD (332 aa)). The 273-residue stretch at 304 to 576 (LNEEHIIGCG…VVQLLESEVM (273 aa)) folds into the Protein kinase domain. Residues 310 to 318 (IGCGGFGTV) and Lys-332 each bind ATP. Ser-384 is subject to Phosphoserine. The Proton acceptor role is filled by Asp-427. 3 positions are modified to phosphothreonine: Thr-460, Thr-461, and Thr-466. Tyr-474 is subject to Phosphotyrosine.

This sequence belongs to the protein kinase superfamily. Ser/Thr protein kinase family. Interacts with the ACC synthases ACS5 and ACS9 but not ACS2, via the kinase domain. Post-translationally, autophosphorylated. In terms of tissue distribution, expressed in the root meristem and elongation zone, and in hypocotyls of etiolated seedlings.

It is found in the cell membrane. It catalyses the reaction L-seryl-[protein] + ATP = O-phospho-L-seryl-[protein] + ADP + H(+). The enzyme catalyses L-threonyl-[protein] + ATP = O-phospho-L-threonyl-[protein] + ADP + H(+). Its function is as follows. Involved in the signaling pathway that regulates cell wall function, including cellulose biosynthesis, likely via an 1-aminocyclopropane-1-carboxylic acid (ACC)-mediated signal (a precursor of ethylene). In Arabidopsis thaliana (Mouse-ear cress), this protein is LRR receptor-like serine/threonine-protein kinase FEI 2 (FEI2).